A 428-amino-acid chain; its full sequence is MLDIRLIRKEPKECEARLQKKDPSISLERLLDLDKNVRQLKADSESLLARRKALSGQIHKAKVANEDATPLIQGVNAIADQLVAFEKTLQEQEALLLDLMARLPNYPDEDVPVSPDKSGNKIIKSHGEIPTFTFPPKHHVQLNEKLQILDFKLPAKTSGSGWPAYKNEGVLLEWALLTYLLNKQQAHGFQLWLPPLLVKRDILFGSGQIPKFDGQYYRVEDGEQSLFLIPTAEVVLNGFHSQEILNEQDLPLYYAAFTPCFRREAGAGGSHERGLVRVHQFHKVEMFAFTTPEQEEIAYQKMIGIVEEILSELQLPYQLSLLSTGDMSFTAKKTIDAEVWLPGQQAFYEVSSISKCGDFQSRRSETRYRDAQGKLHFVNTLNGSGLATPRLLVAILENYQQEDGSVVIPHALRPYMNNQEILLPKTDR.

231 to 233 lines the L-serine pocket; that stretch reads TAE. Residues 262-264 and Val278 contribute to the ATP site; that span reads RRE. Position 285 (Glu285) interacts with L-serine. 349 to 352 is an ATP binding site; the sequence is EVSS. Ser384 is a binding site for L-serine.

It belongs to the class-II aminoacyl-tRNA synthetase family. Type-1 seryl-tRNA synthetase subfamily. In terms of assembly, homodimer. The tRNA molecule binds across the dimer.

Its subcellular location is the cytoplasm. The catalysed reaction is tRNA(Ser) + L-serine + ATP = L-seryl-tRNA(Ser) + AMP + diphosphate + H(+). It carries out the reaction tRNA(Sec) + L-serine + ATP = L-seryl-tRNA(Sec) + AMP + diphosphate + H(+). Its pathway is aminoacyl-tRNA biosynthesis; selenocysteinyl-tRNA(Sec) biosynthesis; L-seryl-tRNA(Sec) from L-serine and tRNA(Sec): step 1/1. In terms of biological role, catalyzes the attachment of serine to tRNA(Ser). Is also able to aminoacylate tRNA(Sec) with serine, to form the misacylated tRNA L-seryl-tRNA(Sec), which will be further converted into selenocysteinyl-tRNA(Sec). In Chlamydia muridarum (strain MoPn / Nigg), this protein is Serine--tRNA ligase.